The sequence spans 147 residues: Diaminohydroxyphosphoribosylamino-pyrimidine deaminase (147 aa).

Residues 1 to 122 (MKDRFYMTRA…LYLRKKGISV (122 aa)) enclose the CMP/dCMP-type deaminase domain. Zn(2+) is bound at residue His50. Catalysis depends on Glu52, which acts as the Proton donor. The Zn(2+) site is built by Cys75 and Cys84.

This sequence belongs to the cytidine and deoxycytidylate deaminase family. Requires Zn(2+) as cofactor.

The catalysed reaction is 2,5-diamino-6-hydroxy-4-(5-phosphoribosylamino)-pyrimidine + H2O + H(+) = 5-amino-6-(5-phospho-D-ribosylamino)uracil + NH4(+). Its pathway is cofactor biosynthesis; riboflavin biosynthesis; 5-amino-6-(D-ribitylamino)uracil from GTP: step 2/4. The sequence is that of Diaminohydroxyphosphoribosylamino-pyrimidine deaminase (ribD1) from Buchnera aphidicola subsp. Schizaphis graminum (strain Sg).